Consider the following 234-residue polypeptide: Peptidyl-prolyl cis-trans isomerase FKBP17-3, chloroplastic (234 aa).

A chloroplast-targeting transit peptide spans 1-28; that stretch reads MATLFTATVPSHHRFVSPSQHPKQSLLS. The region spanning 130 to 228 is the PPIase FKBP-type domain; sequence GYLVVFDVKG…DYIIEVDTVY (99 aa).

Belongs to the FKBP-type PPIase family.

The protein localises to the plastid. It localises to the chloroplast thylakoid lumen. It catalyses the reaction [protein]-peptidylproline (omega=180) = [protein]-peptidylproline (omega=0). PPIases accelerate the folding of proteins. It catalyzes the cis-trans isomerization of proline imidic peptide bonds in oligopeptides. This chain is Peptidyl-prolyl cis-trans isomerase FKBP17-3, chloroplastic (FKBP17-3), found in Arabidopsis thaliana (Mouse-ear cress).